We begin with the raw amino-acid sequence, 358 residues long: 3-ketosteroid-9-alpha-monooxygenase, ferredoxin reductase component (358 aa).

The 113-residue stretch at 12-124 (DHVLELQIAE…LAPSGNFVPT (113 aa)) folds into the FAD-binding FR-type domain. In terms of domain architecture, 2Fe-2S ferredoxin-type spans 269–358 (ATAVVELDGQ…SDSVEVTYDE (90 aa)). Cys305, Cys310, Cys313, and Cys343 together coordinate [2Fe-2S] cluster.

In terms of assembly, monomer. The two-component system 3-ketosteroid-9-alpha-monooxygenase is composed of an oxygenase component KshA and a reductase component KshB. The cofactor is FAD. Requires [2Fe-2S] cluster as cofactor.

The enzyme catalyses androsta-1,4-diene-3,17-dione + 2 reduced [2Fe-2S]-[ferredoxin] + O2 + 2 H(+) = 9alpha-hydroxyandrosta-1,4-diene-3,17-dione + 2 oxidized [2Fe-2S]-[ferredoxin] + H2O. It participates in lipid metabolism; steroid biosynthesis. In terms of biological role, involved in the degradation of cholesterol. Catalyzes the introduction of a 9a-hydroxyl moiety into 1,4-androstadiene-3,17-dione (ADD) to yield the 9alpha-hydroxy-1,4-androstadiene-3,17-dione (9OHADD) intermediate which spontaneously form 3-hydroxy-9,10-seconandrost-1,3,5(10)-triene-9,17-dione (HSA) via the meta-cleavage of ring B with concomitant aromatization of ring A. This is 3-ketosteroid-9-alpha-monooxygenase, ferredoxin reductase component (hmp) from Mycobacterium tuberculosis (strain CDC 1551 / Oshkosh).